The primary structure comprises 201 residues: Recombination protein RecR (201 aa).

Residues 57 to 72 form a C4-type zinc finger; sequence CADCRTFTEQEHCTIC. The 96-residue stretch at 81–176 folds into the Toprim domain; it reads GQICVVESPA…LASRIAHGVP (96 aa).

Belongs to the RecR family.

Its function is as follows. May play a role in DNA repair. It seems to be involved in an RecBC-independent recombinational process of DNA repair. It may act with RecF and RecO. This Yersinia enterocolitica serotype O:8 / biotype 1B (strain NCTC 13174 / 8081) protein is Recombination protein RecR.